A 98-amino-acid chain; its full sequence is Large ribosomal subunit protein eL21 (98 aa).

It belongs to the eukaryotic ribosomal protein eL21 family.

This is Large ribosomal subunit protein eL21 from Korarchaeum cryptofilum (strain OPF8).